The sequence spans 180 residues: Large ribosomal subunit protein uL5 (180 aa).

Belongs to the universal ribosomal protein uL5 family. In terms of assembly, part of the 50S ribosomal subunit; part of the 5S rRNA/L5/L18/L25 subcomplex. Contacts the 5S rRNA and the P site tRNA. Forms a bridge to the 30S subunit in the 70S ribosome.

Functionally, this is one of the proteins that bind and probably mediate the attachment of the 5S RNA into the large ribosomal subunit, where it forms part of the central protuberance. In the 70S ribosome it contacts protein S13 of the 30S subunit (bridge B1b), connecting the 2 subunits; this bridge is implicated in subunit movement. Contacts the P site tRNA; the 5S rRNA and some of its associated proteins might help stabilize positioning of ribosome-bound tRNAs. The polypeptide is Large ribosomal subunit protein uL5 (Stenotrophomonas maltophilia (strain K279a)).